Reading from the N-terminus, the 306-residue chain is Putative F-box protein At1g47300 (306 aa).

The region spanning 1–45 (MISDSIPKELILEIMLRLPAKSIARFHCVSKQWASMLSRPYFTEL) is the F-box domain. A disordered region spans residues 235–278 (DPKLLESKEEEEEEEEEEEEEEEEEEEEEEEEEEEESKEREKEK). Over residues 242-270 (KEEEEEEEEEEEEEEEEEEEEEEEEEEEE) the composition is skewed to acidic residues.

This is Putative F-box protein At1g47300 from Arabidopsis thaliana (Mouse-ear cress).